We begin with the raw amino-acid sequence, 141 residues long: Nucleoside diphosphate kinase (141 aa).

ATP-binding residues include lysine 11, phenylalanine 59, arginine 87, threonine 93, arginine 104, and asparagine 114. Histidine 117 acts as the Pros-phosphohistidine intermediate in catalysis.

The protein belongs to the NDK family. In terms of assembly, homotetramer. Requires Mg(2+) as cofactor.

The protein resides in the cytoplasm. The enzyme catalyses a 2'-deoxyribonucleoside 5'-diphosphate + ATP = a 2'-deoxyribonucleoside 5'-triphosphate + ADP. It catalyses the reaction a ribonucleoside 5'-diphosphate + ATP = a ribonucleoside 5'-triphosphate + ADP. Its function is as follows. Major role in the synthesis of nucleoside triphosphates other than ATP. The ATP gamma phosphate is transferred to the NDP beta phosphate via a ping-pong mechanism, using a phosphorylated active-site intermediate. In Pseudomonas putida (strain GB-1), this protein is Nucleoside diphosphate kinase.